The following is a 421-amino-acid chain: Proton/sodium-glutamate symport protein (421 aa).

At 1 to 3 (MRK) the chain is on the cytoplasmic side. Residues 4 to 24 (IGLAWQIFIGLILGIIVGAIF) form a helical membrane-spanning segment. The Extracellular segment spans residues 25–43 (YGNPKVAAYLQPIGDIFLR). A helical membrane pass occupies residues 44–64 (LIKMIVIPIVISSLVVGVASV). The Cytoplasmic portion of the chain corresponds to 65 to 77 (GDLKKLGKLGGKT). A helical transmembrane segment spans residues 78–98 (IIYFEIITTIAIVVGLLAANI). Over 99 to 148 (FQPGAGVNMKSLEKTDIQSYVDTTNEVQHHSMVETFVNIVPKNIFESLST) the chain is Extracellular. The helical transmembrane segment at 149–169 (GDMLPIIFFSVMFGLGVAAIG) threads the bilayer. At 170–198 (EKGKPVLQFFQGTAEAMFYVTNQIMKFAP) the chain is on the cytoplasmic side. A helical membrane pass occupies residues 199 to 219 (FGVFALIGVTVSKFGVESLIP). Over 220–222 (LSK) the chain is Extracellular. A helical membrane pass occupies residues 223–243 (LVIVVYATMLFFIFAVLGGVA). Lys-244 is a topological domain (cytoplasmic). A helical membrane pass occupies residues 245 to 265 (LFGINIFHIIKILKDELILAY). Over 266-306 (STASSETVLPRIMDKMEKFGCPKAITSFVIPTGYSFNLDGS) the chain is Extracellular. Residues 307–327 (TLYQALAAIFIAQLYGIDMSV) form a helical membrane-spanning segment. Over 328-330 (SQQ) the chain is Cytoplasmic. The next 2 membrane-spanning stretches (helical) occupy residues 331–351 (ISLLLVLMVTSKGIAGVPGVS) and 352–372 (FVVLLATLGTVGIPVEGLAFI). Residues 373-421 (AGIDRILDMARTAVNVIGNSLAAIIMSKWEGQYNEEKGKQYLAELQQSA) lie on the Cytoplasmic side of the membrane.

Belongs to the dicarboxylate/amino acid:cation symporter (DAACS) (TC 2.A.23) family. In terms of assembly, homotrimer.

It localises to the cell membrane. This carrier protein is part of the Na(+)-dependent, binding-protein-independent glutamate-aspartate transport system. In Bacillus caldotenax, this protein is Proton/sodium-glutamate symport protein (gltT).